Consider the following 840-residue polypeptide: E3 ubiquitin-protein ligase SH3RF1 (840 aa).

The segment at 12–53 adopts an RING-type zinc-finger fold; that stretch reads CPVCLERLDASAKVLPCQHTFCKRCLLGIVGSRNELRCPECR. Residues 105-129 form a disordered region; that stretch reads VTCSPKDGPSSQGGPQPRAQAWSPP. SH3 domains follow at residues 134–193 and 196–259; these read PQLP…IIKP and QPPP…FNSA. 6 disordered regions span residues 267 to 324, 394 to 442, 516 to 545, 578 to 633, 652 to 723, and 744 to 773; these read DQPP…RHSM, TLNP…PRPS, GPAS…VAGG, QARS…AASG, AASL…LGAE, and MAPG…SLGP. The segment covering 273–282 has biased composition (low complexity); the sequence is GVAAGEGALA. Residues 283–292 are compositionally biased toward polar residues; it reads TTPSSTTTKQ. An interaction with RAC1 region spans residues 292–362; sequence QPDGKKNTKK…APSQVHISTT (71 aa). Ser304 carries the phosphoserine modification. Low complexity-rich tracts occupy residues 307-320 and 405-424; these read SLSM…AAQQ and QAAT…GPRP. Residues 434–537 form an interaction with AKT2 region; that stretch reads HPRPQPRPSV…PSTGGPAQKP (104 aa). The SH3 3 domain occupies 439–500; the sequence is PRPSVYVAIY…PGNYVAPVTR (62 aa). A compositionally biased stretch (pro residues) spans 616-625; it reads SPQPPAPLGP. A compositionally biased stretch (basic and acidic residues) spans 681-692; it reads RPDKDGKKEKKG. Position 709 is a phosphoserine (Ser709). In terms of domain architecture, SH3 4 spans 781-840; it reads AVCERHRVVVSYPPQSEAELELKEGDIVFVHKKREDGWFKGTLQRNGKTGLFPGSFVENI.

The protein belongs to the SH3RF family. Interacts with RAC1; in a GTP-dependent manner. Interacts with MAP3K10/MLK2 and MAP3K11/MLK3. Interacts with MAPK8IP; this interaction leads to the PJAC complex (POSH-JIP or SH3RF1/MAPK8IP apoptotic complex) with a 1:1 ratio. Interacts with SIAH1. Interacts with HERP1. Probably part of a signaling complex that may contain SH3RF1, MAPK8IP, DLK1, MAP2K4/MKK4, MAP2K7/MKK7, MAPK8/JNK1, MAPK9/JNK2, AKT1 and AKT2. Found in a complex with RAC2, MAP3K7/TAK1, MAP2K7/MKK7, MAPK8IP1/JIP1, MAPK8/JNK1 and MAPK9/JNK2. Found in a complex with RAC1, MAP3K11/MLK3, MAP2K7/MKK7, MAPK8IP1/JIP1 and MAPK8/JNK1. Interacts with SH3RF2. Post-translationally, phosphorylated at Ser-304 by AKT1 and AKT2. When phosphorylated, it has reduced ability to bind Rac. Autoubiquitinated. Ubiquitinated by SH3RF2, leading to proteasome-mediated degradation.

The protein localises to the cytoplasm. It is found in the perinuclear region. Its subcellular location is the cell projection. It localises to the lamellipodium. The protein resides in the golgi apparatus. The protein localises to the trans-Golgi network. It carries out the reaction S-ubiquitinyl-[E2 ubiquitin-conjugating enzyme]-L-cysteine + [acceptor protein]-L-lysine = [E2 ubiquitin-conjugating enzyme]-L-cysteine + N(6)-ubiquitinyl-[acceptor protein]-L-lysine.. The protein operates within protein modification; protein ubiquitination. In terms of biological role, has E3 ubiquitin-protein ligase activity. In the absence of an external substrate, it can catalyze self-ubiquitination. Stimulates ubiquitination of potassium channel KCNJ1, enhancing it's dynamin-dependent and clathrin-independent endocytosis. Acts as a scaffold protein that coordinates with MAPK8IP1/JIP1 in organizing different components of the JNK pathway, including RAC1 or RAC2, MAP3K11/MLK3 or MAP3K7/TAK1, MAP2K7/MKK7, MAPK8/JNK1 and/or MAPK9/JNK2 into a functional multiprotein complex to ensure the effective activation of the JNK signaling pathway. Regulates the differentiation of CD4(+) and CD8(+) T-cells and promotes T-helper 1 (Th1) cell differentiation. Regulates the activation of MAPK8/JNK1 and MAPK9/JNK2 in CD4(+) T-cells and the activation of MAPK8/JNK1 in CD8(+) T-cells. Plays a crucial role in the migration of neocortical neurons in the developing brain. Controls proper cortical neuronal migration and the formation of proximal cytoplasmic dilation in the leading process (PCDLP) in migratory neocortical neurons by regulating the proper localization of activated RAC1 and F-actin assembly. The chain is E3 ubiquitin-protein ligase SH3RF1 (SH3RF1) from Bos taurus (Bovine).